Reading from the N-terminus, the 485-residue chain is Ribulose bisphosphate carboxylase large chain (485 aa).

Asparagine 124 and threonine 174 together coordinate substrate. Catalysis depends on lysine 176, which acts as the Proton acceptor. Residue lysine 178 participates in substrate binding. Mg(2+)-binding residues include lysine 202, aspartate 204, and glutamate 205. Residue lysine 202 is modified to N6-carboxylysine. Histidine 294 functions as the Proton acceptor in the catalytic mechanism. Arginine 295, histidine 327, and serine 379 together coordinate substrate.

This sequence belongs to the RuBisCO large chain family. Type I subfamily. Heterohexadecamer of 8 large chains and 8 small chains. Requires Mg(2+) as cofactor.

The enzyme catalyses 2 (2R)-3-phosphoglycerate + 2 H(+) = D-ribulose 1,5-bisphosphate + CO2 + H2O. The catalysed reaction is D-ribulose 1,5-bisphosphate + O2 = 2-phosphoglycolate + (2R)-3-phosphoglycerate + 2 H(+). Functionally, ruBisCO catalyzes two reactions: the carboxylation of D-ribulose 1,5-bisphosphate, the primary event in carbon dioxide fixation, as well as the oxidative fragmentation of the pentose substrate. Both reactions occur simultaneously and in competition at the same active site. This chain is Ribulose bisphosphate carboxylase large chain, found in Rhodopseudomonas palustris (strain TIE-1).